The chain runs to 203 residues: LexA repressor (203 aa).

Residues 30 to 50 (VREICQAVSLKSTSTVHGHLK) constitute a DNA-binding region (H-T-H motif). Active-site for autocatalytic cleavage activity residues include Ser-127 and Lys-164.

Belongs to the peptidase S24 family. As to quaternary structure, homodimer.

It carries out the reaction Hydrolysis of Ala-|-Gly bond in repressor LexA.. Its function is as follows. Represses a number of genes involved in the response to DNA damage (SOS response), including recA and lexA. In the presence of single-stranded DNA, RecA interacts with LexA causing an autocatalytic cleavage which disrupts the DNA-binding part of LexA, leading to derepression of the SOS regulon and eventually DNA repair. The chain is LexA repressor from Clostridium perfringens (strain SM101 / Type A).